Reading from the N-terminus, the 122-residue chain is UPF0382 membrane protein SAB0533 (122 aa).

Helical transmembrane passes span 3–23 (LFIILGALNAMMAVGTGAFGA), 46–66 (MYHGLALLIIGVISGTTSINV), 69–89 (AGWLIFAGIIFFSGSLYILVL), and 98–118 (ITPIGGVLFIIGWIMLIIATF).

Belongs to the UPF0382 family.

Its subcellular location is the cell membrane. This is UPF0382 membrane protein SAB0533 from Staphylococcus aureus (strain bovine RF122 / ET3-1).